A 297-amino-acid polypeptide reads, in one-letter code: uncharacterized protein (297 aa).

Residues 1–12 are compositionally biased toward polar residues; that stretch reads MASYSFQFSTDA. Residues 1 to 21 form a disordered region; it reads MASYSFQFSTDATGKPGAAKP.

This sequence to B.subtilis XkdY/XepA.

This is an uncharacterized protein from Bacillus subtilis (strain 168).